The primary structure comprises 257 residues: Imidazole glycerol phosphate synthase subunit HisF (257 aa).

Catalysis depends on residues Asp-12 and Asp-131.

Belongs to the HisA/HisF family. Heterodimer of HisH and HisF.

The protein localises to the cytoplasm. It catalyses the reaction 5-[(5-phospho-1-deoxy-D-ribulos-1-ylimino)methylamino]-1-(5-phospho-beta-D-ribosyl)imidazole-4-carboxamide + L-glutamine = D-erythro-1-(imidazol-4-yl)glycerol 3-phosphate + 5-amino-1-(5-phospho-beta-D-ribosyl)imidazole-4-carboxamide + L-glutamate + H(+). Its pathway is amino-acid biosynthesis; L-histidine biosynthesis; L-histidine from 5-phospho-alpha-D-ribose 1-diphosphate: step 5/9. IGPS catalyzes the conversion of PRFAR and glutamine to IGP, AICAR and glutamate. The HisF subunit catalyzes the cyclization activity that produces IGP and AICAR from PRFAR using the ammonia provided by the HisH subunit. The polypeptide is Imidazole glycerol phosphate synthase subunit HisF (Mycobacteroides abscessus (strain ATCC 19977 / DSM 44196 / CCUG 20993 / CIP 104536 / JCM 13569 / NCTC 13031 / TMC 1543 / L948) (Mycobacterium abscessus)).